Here is a 223-residue protein sequence, read N- to C-terminus: Small ribosomal subunit protein uS3 (223 aa).

A KH type-2 domain is found at 38–106 (IREFIAKQLT…RVHINIVEIK (69 aa)).

The protein belongs to the universal ribosomal protein uS3 family. As to quaternary structure, part of the 30S ribosomal subunit. Forms a tight complex with proteins S10 and S14.

Its function is as follows. Binds the lower part of the 30S subunit head. Binds mRNA in the 70S ribosome, positioning it for translation. In Pediococcus pentosaceus (strain ATCC 25745 / CCUG 21536 / LMG 10740 / 183-1w), this protein is Small ribosomal subunit protein uS3.